Reading from the N-terminus, the 182-residue chain is UPF0398 protein lwe1908 (182 aa).

This sequence belongs to the UPF0398 family.

This is UPF0398 protein lwe1908 from Listeria welshimeri serovar 6b (strain ATCC 35897 / DSM 20650 / CCUG 15529 / CIP 8149 / NCTC 11857 / SLCC 5334 / V8).